We begin with the raw amino-acid sequence, 92 residues long: Small ribosomal subunit protein uS19 (92 aa).

The protein belongs to the universal ribosomal protein uS19 family.

Its function is as follows. Protein S19 forms a complex with S13 that binds strongly to the 16S ribosomal RNA. The polypeptide is Small ribosomal subunit protein uS19 (Bifidobacterium animalis subsp. lactis (strain AD011)).